A 236-amino-acid chain; its full sequence is Protein CUSTOS (236 aa).

2 disordered regions span residues 1–57 (MSES…GTTP) and 83–236 (VEPA…KKDE). 2 stretches are compositionally biased toward basic and acidic residues: residues 10–51 (NTAR…HDGN) and 156–165 (EKTEEKSTKE). The Nucleolar localization signal (NLS1) signature appears at 173–181 (KMKKKKKRK). The span at 182 to 196 (TSSEESQDKVNHQTE) shows a compositional bias: basic and acidic residues. Residues 197-210 (KQSNVEGNQEQTTA) show a composition bias toward polar residues. The short motif at 211–219 (GERLKKKKK) is the Nucleolar localization signal (NLS2) element. Positions 214–227 (LKKKKKKKKKKRKK) are enriched in basic residues.

It belongs to the CUSTOS family. Interacts (via NLS1 and NLS2) with dvl2; the interaction is negatively regulated by Wnt stimulation. Interacts with csnk1a1. Interacts with ctnnb1; the interaction is positively regulated by Wnt stimulation. In terms of processing, phosphorylated by ck1/csnk1a1.

It localises to the nucleus envelope. In terms of biological role, essential for Spemann-Mangold organizer formation and subsequent anterior head development in the embryo. Inhibits canonical Wnt signaling pathway by antagonizing nuclear import of beta-catenin (ctnnb1) during embryogenesis. This Danio rerio (Zebrafish) protein is Protein CUSTOS.